Reading from the N-terminus, the 207-residue chain is Probable nicotinate-nucleotide adenylyltransferase (207 aa).

The protein belongs to the NadD family.

The enzyme catalyses nicotinate beta-D-ribonucleotide + ATP + H(+) = deamido-NAD(+) + diphosphate. It functions in the pathway cofactor biosynthesis; NAD(+) biosynthesis; deamido-NAD(+) from nicotinate D-ribonucleotide: step 1/1. Catalyzes the reversible adenylation of nicotinate mononucleotide (NaMN) to nicotinic acid adenine dinucleotide (NaAD). The chain is Probable nicotinate-nucleotide adenylyltransferase from Synechococcus sp. (strain JA-3-3Ab) (Cyanobacteria bacterium Yellowstone A-Prime).